Here is a 295-residue protein sequence, read N- to C-terminus: tRNA dimethylallyltransferase (295 aa).

9–16 lines the ATP pocket; sequence GATATGKS. Residue 11-16 participates in substrate binding; the sequence is TATGKS. Residues 34–37 are interaction with substrate tRNA; the sequence is DSRQ.

It belongs to the IPP transferase family. As to quaternary structure, monomer. The cofactor is Mg(2+).

The enzyme catalyses adenosine(37) in tRNA + dimethylallyl diphosphate = N(6)-dimethylallyladenosine(37) in tRNA + diphosphate. Its function is as follows. Catalyzes the transfer of a dimethylallyl group onto the adenine at position 37 in tRNAs that read codons beginning with uridine, leading to the formation of N6-(dimethylallyl)adenosine (i(6)A). The polypeptide is tRNA dimethylallyltransferase (Nostoc sp. (strain PCC 7120 / SAG 25.82 / UTEX 2576)).